The chain runs to 126 residues: Large ribosomal subunit protein uL22 (126 aa).

Belongs to the universal ribosomal protein uL22 family. In terms of assembly, part of the 50S ribosomal subunit.

Its function is as follows. This protein binds specifically to 23S rRNA; its binding is stimulated by other ribosomal proteins, e.g. L4, L17, and L20. It is important during the early stages of 50S assembly. It makes multiple contacts with different domains of the 23S rRNA in the assembled 50S subunit and ribosome. The globular domain of the protein is located near the polypeptide exit tunnel on the outside of the subunit, while an extended beta-hairpin is found that lines the wall of the exit tunnel in the center of the 70S ribosome. The polypeptide is Large ribosomal subunit protein uL22 (Zymomonas mobilis subsp. mobilis (strain ATCC 31821 / ZM4 / CP4)).